The chain runs to 142 residues: Hemoglobin subunit alpha (142 aa).

S1 carries the post-translational modification N-acetylserine. The Globin domain maps to 1 to 142 (SLSDKDKAAV…LSLALAEKYR (142 aa)). H59 and H88 together coordinate heme b.

Belongs to the globin family. In terms of assembly, heterotetramer of two alpha chains and two beta chains. As to expression, red blood cells.

Its function is as follows. Involved in oxygen transport from gills to the various peripheral tissues. This Lycodes reticulatus (Arctic eelpout) protein is Hemoglobin subunit alpha.